The sequence spans 81 residues: ATP synthase subunit c (81 aa).

The next 2 helical transmembrane spans lie at 6 to 26 and 57 to 77; these read AAASVIAAALAVGLAAIGPGI and LAFMEALTIYGLVVALVLLFA.

It belongs to the ATPase C chain family. In terms of assembly, F-type ATPases have 2 components, F(1) - the catalytic core - and F(0) - the membrane proton channel. F(1) has five subunits: alpha(3), beta(3), gamma(1), delta(1), epsilon(1). F(0) has four main subunits: a(1), b(1), b'(1) and c(10-14). The alpha and beta chains form an alternating ring which encloses part of the gamma chain. F(1) is attached to F(0) by a central stalk formed by the gamma and epsilon chains, while a peripheral stalk is formed by the delta, b and b' chains.

It localises to the cellular thylakoid membrane. Its function is as follows. F(1)F(0) ATP synthase produces ATP from ADP in the presence of a proton or sodium gradient. F-type ATPases consist of two structural domains, F(1) containing the extramembraneous catalytic core and F(0) containing the membrane proton channel, linked together by a central stalk and a peripheral stalk. During catalysis, ATP synthesis in the catalytic domain of F(1) is coupled via a rotary mechanism of the central stalk subunits to proton translocation. Key component of the F(0) channel; it plays a direct role in translocation across the membrane. A homomeric c-ring of between 10-14 subunits forms the central stalk rotor element with the F(1) delta and epsilon subunits. This Picosynechococcus sp. (strain ATCC 27264 / PCC 7002 / PR-6) (Agmenellum quadruplicatum) protein is ATP synthase subunit c.